A 417-amino-acid chain; its full sequence is Phosphoribosylamine--glycine ligase (417 aa).

An ATP-grasp domain is found at 108–307; sequence KRIMDEAGVP…LSTLLFAAAT (200 aa). 134–188 is a binding site for ATP; the sequence is LDEFGAPYVVKADGLAAGKGVIVTEDRAAALAHAARYLTHGSVLVEEFLDGEEVS. Mg(2+) contacts are provided by Glu-277 and Asn-279.

Belongs to the GARS family. Mg(2+) serves as cofactor. Mn(2+) is required as a cofactor.

It carries out the reaction 5-phospho-beta-D-ribosylamine + glycine + ATP = N(1)-(5-phospho-beta-D-ribosyl)glycinamide + ADP + phosphate + H(+). The protein operates within purine metabolism; IMP biosynthesis via de novo pathway; N(1)-(5-phospho-D-ribosyl)glycinamide from 5-phospho-alpha-D-ribose 1-diphosphate: step 2/2. The chain is Phosphoribosylamine--glycine ligase from Leifsonia xyli subsp. xyli (strain CTCB07).